Reading from the N-terminus, the 850-residue chain is Response regulator sskA (850 aa).

Disordered stretches follow at residues 1–225 and 419–542; these read MPDR…GASS and IPQR…GQSP. Low complexity predominate over residues 7–25; that stretch reads SQLLKSKLLRRSSTTATTS. A compositionally biased stretch (polar residues) spans 117–138; that stretch reads GANSRQEGSQNGSIQQSPTFTR. Over residues 144 to 163 the composition is skewed to basic and acidic residues; it reads QLTEEKDKGKLQSREGDQRG. Polar residues predominate over residues 177–196; that stretch reads SDPQYSLTTELANKPSTPQT. The span at 436–445 shows a compositional bias: basic and acidic residues; that stretch reads HHSEPGEHGE. A compositionally biased stretch (polar residues) spans 477 to 490; that stretch reads PSISILTTDSNMAS. Residues 492-511 are compositionally biased toward pro residues; sequence PQPPVAAPQVPTPPGPPPES. The Response regulatory domain occupies 558–719; sequence NVLIVEDNII…WLEQKVTEWG (162 aa). Aspartate 607 carries the post-translational modification 4-aspartylphosphate. Residues 736-850 are disordered; sequence FADEPQSSSP…DEEQQALDAT (115 aa). The span at 762–782 shows a compositional bias: low complexity; it reads SSRTSTSPSSAAVNATARAFA. The segment covering 819–828 has biased composition (polar residues); that stretch reads TLDSPASPLT. The span at 839 to 850 shows a compositional bias: acidic residues; sequence PGDEEQQALDAT.

Belongs to the SSK1 family.

The protein resides in the cytoplasm. Its function is as follows. Final receptor of the osmolarity two-component system regulatory system, which controls activity of the sakA mitogen-activated protein kinase (MAPK) pathway in response to changes in the osmolarity of the extracellular environment. Regulates the germination in the airways that drives enhanced disease initiation and inflammation in the lungs. The sequence is that of Response regulator sskA from Aspergillus fumigatus (strain ATCC MYA-4609 / CBS 101355 / FGSC A1100 / Af293) (Neosartorya fumigata).